We begin with the raw amino-acid sequence, 193 residues long: Potassium-transporting ATPase KdpC subunit (193 aa).

A helical membrane pass occupies residues 7–27; the sequence is PALVLFALLSALTGLAYPLAV.

This sequence belongs to the KdpC family. As to quaternary structure, the system is composed of three essential subunits: KdpA, KdpB and KdpC.

It localises to the cell inner membrane. Functionally, part of the high-affinity ATP-driven potassium transport (or Kdp) system, which catalyzes the hydrolysis of ATP coupled with the electrogenic transport of potassium into the cytoplasm. This subunit acts as a catalytic chaperone that increases the ATP-binding affinity of the ATP-hydrolyzing subunit KdpB by the formation of a transient KdpB/KdpC/ATP ternary complex. The protein is Potassium-transporting ATPase KdpC subunit of Variovorax paradoxus (strain S110).